Consider the following 66-residue polypeptide: Large ribosomal subunit protein uL29 (66 aa).

This sequence belongs to the universal ribosomal protein uL29 family.

In Petrotoga mobilis (strain DSM 10674 / SJ95), this protein is Large ribosomal subunit protein uL29.